The primary structure comprises 265 residues: Glutamate racemase (265 aa).

Substrate contacts are provided by residues 7–8 and 39–40; these read DS and YG. The active-site Proton donor/acceptor is Cys70. 71–72 lines the substrate pocket; the sequence is NT. Catalysis depends on Cys177, which acts as the Proton donor/acceptor.

It belongs to the aspartate/glutamate racemases family.

It catalyses the reaction L-glutamate = D-glutamate. Its pathway is cell wall biogenesis; peptidoglycan biosynthesis. Provides the (R)-glutamate required for cell wall biosynthesis. The polypeptide is Glutamate racemase (Prochlorococcus marinus (strain NATL1A)).